The following is a 234-amino-acid chain: Ras-related protein Rab-20 (234 aa).

Residues glycine 17, lysine 18, threonine 19, aspartate 32, and threonine 36 each coordinate GTP. Threonine 19 is a Mg(2+) binding site. Short sequence motifs (switch) lie at residues arginine 28–phenylalanine 41 and aspartate 55–glycine 72. Positions 36 and 55 each coordinate Mg(2+). GTP is bound by residues glycine 58, asparagine 113, lysine 114, and aspartate 116. Residues glycine 125–arginine 144 are disordered. Basic and acidic residues predominate over residues glutamine 126–serine 142. The GTP site is built by alanine 184 and lysine 185. Residues arginine 212–alanine 234 are disordered. Residues lysine 223–alanine 234 are compositionally biased toward basic residues. Residues cysteine 232 and cysteine 233 are each lipidated (S-geranylgeranyl cysteine).

It belongs to the small GTPase superfamily. Rab family. It depends on Mg(2+) as a cofactor. Low or absent expression in normal pancreas and stronger expression in 15 of 18 exocrine pancreatic adenocarcinomas (at protein level).

Its subcellular location is the golgi apparatus. The protein localises to the cytoplasmic vesicle. It localises to the phagosome. The protein resides in the phagosome membrane. It catalyses the reaction GTP + H2O = GDP + phosphate + H(+). Regulated by guanine nucleotide exchange factors (GEFs) which promote the exchange of bound GDP for free GTP. Regulated by GTPase activating proteins (GAPs) which increase the GTP hydrolysis activity. Inhibited by GDP dissociation inhibitors (GDIs). Functionally, the small GTPases Rab are key regulators of intracellular membrane trafficking, from the formation of transport vesicles to their fusion with membranes. Rabs cycle between an inactive GDP-bound form and an active GTP-bound form that is able to recruit to membranes different sets of downstream effectors directly responsible for vesicle formation, movement, tethering and fusion. RAB20 plays a role in apical endocytosis/recycling. Plays a role in the maturation and acidification of phagosomes that engulf pathogens, such as S.aureus and M.tuberculosis. Plays a role in the fusion of phagosomes with lysosomes. The sequence is that of Ras-related protein Rab-20 from Homo sapiens (Human).